A 194-amino-acid polypeptide reads, in one-letter code: RNA polymerase II subunit A C-terminal domain phosphatase SSU72 like protein 5 (194 aa).

It belongs to the SSU72 phosphatase family.

The protein resides in the nucleus. It carries out the reaction O-phospho-L-seryl-[protein] + H2O = L-seryl-[protein] + phosphate. It catalyses the reaction O-phospho-L-threonyl-[protein] + H2O = L-threonyl-[protein] + phosphate. Its function is as follows. Protein phosphatase that catalyzes the dephosphorylation of the C-terminal domain of RNA polymerase II. Plays a role in RNA processing and termination. This is RNA polymerase II subunit A C-terminal domain phosphatase SSU72 like protein 5 from Homo sapiens (Human).